The chain runs to 1150 residues: Apomucin (1150 aa).

Low complexity-rich tracts occupy residues 1–36 (ETARPSVAGSGTTGTVSGASGSTGSSSGSTGATGAS) and 46–79 (SVAGSSGAPAVSSGASQAAGTSGAGPGTTASSVG). 5 consecutive repeat copies span residues 1–44 (ETAR…ETSR), 45–125 (ISVA…ETSR), 126–206 (ISVA…ETSR), 207–287 (ISVA…ETSR), and 288–368 (ISVA…ETSR). Positions 1–368 (ETARPSVAGS…ASIGQPETSR (368 aa)) are 6 X 81 AA tandem repeats. Disordered stretches follow at residues 1–730 (ETAR…KTGI) and 776–925 (APGS…PAPL). O-linked (GalNAc...) serine; partial glycans are attached at residues Ser-46, Ser-50, Ser-51, Ser-57, Ser-58, and Ser-61. O-linked (GalNAc...) threonine; partial glycosylation is present at Thr-66. O-linked (GalNAc...) serine; partial glycosylation occurs at Ser-67. O-linked (GalNAc...) threonine; partial glycans are attached at residues Thr-73 and Thr-74. Ser-76 and Ser-77 each carry an O-linked (GalNAc...) serine; partial glycan. 2 O-linked (GalNAc...) threonine; partial glycosylation sites follow: Thr-81 and Thr-83. Residues 86–117 (PSVAGSGTTGTVSGASGSTGSSSGSPGATGAS) are compositionally biased toward low complexity. 2 O-linked (GalNAc...) serine; partial glycosylation sites follow: Ser-87 and Ser-91. Residues Thr-93, Thr-94, and Thr-96 are each glycosylated (O-linked (GalNAc...) threonine; partial). O-linked (GalNAc...) serine; partial glycans are attached at residues Ser-98, Ser-101, and Ser-103. Thr-104 is a glycosylation site (O-linked (GalNAc...) threonine; partial). O-linked (GalNAc...) serine; partial glycosylation is found at Ser-106, Ser-107, Ser-108, and Ser-110. O-linked (GalNAc...) threonine; partial glycosylation is present at Thr-114. A glycan (O-linked (GalNAc...) serine; partial) is linked at Ser-117. O-linked (GalNAc...) threonine; partial glycosylation occurs at Thr-123. O-linked (GalNAc...) serine; partial glycosylation occurs at Ser-124. Composition is skewed to low complexity over residues 127–160 (SVAGSSGAPAVSSGASQAAGTSGAGPGTTASSVG), 167–198 (PSVAGSGTTGTVSGASGSTGSSSGSPGATGAS), 208–241 (SVAGSSGAPAVSSGASQAAGTSGAGPGTTASSVG), 248–279 (PSVAGSGTTGTVSGASGSTGSSSGSPGATGAS), 289–322 (SVAGSSGAPAVSSGASQAAGTSGAGPGTTASSVG), 329–360 (PSVAGSGTTGTVSGASGSTGSSSGSPGATGAS), and 370–396 (SVAGSSGAPAVSSGASQAAGTSEATTS). The 6; truncated repeat unit spans residues 369 to 391 (ISVAGSSGAPAVSSGASQAAGTS). N-linked (GlcNAc...) asparagine glycosylation occurs at Asn-418. A compositionally biased stretch (polar residues) spans 442–459 (SYNTEATTSIGRSGTTHT). Residues 473–506 (SHSSQSSKPGSSVTTPGSPESGSETGTSGEFSTT) are compositionally biased toward low complexity. 2 stretches are compositionally biased toward polar residues: residues 507–517 (VISGSSHTEAT) and 537–547 (ELSGTTIASGN). Asn-547 carries an N-linked (GlcNAc...) asparagine glycan. A compositionally biased stretch (low complexity) spans 548 to 558 (ATTEATTSTET). Positions 564 to 586 (TGAQTTVPGSQVSGSETGTSEAV) are enriched in polar residues. Residues 590–625 (AIASGSSSTGTTSGASDSQVTGSRTGTTGVVLGTTV) are compositionally biased toward low complexity. Composition is skewed to polar residues over residues 626-635 (APGSSSTGAT) and 643-661 (GTRSTSLGTTRVASGTTYE). Residues 671–682 (GGSGTPGSGINT) show a composition bias toward gly residues. Composition is skewed to polar residues over residues 688-697 (QVTGIQTGTT), 706-729 (LPGSSNTGATTSPSERTSPGSKTG), and 779-788 (SFNTKATTPT). Over residues 790-833 (VRAATGAGTAVGATSRSTGISTGPENSTPGTTETGSGTTSSPGG) the composition is skewed to low complexity. Residues 875–908 (ETTTAPRISATGSTSVSKEITASPKVSSPETTAG) show a composition bias toward polar residues. 4 N-linked (GlcNAc...) asparagine glycosylation sites follow: Asn-917, Asn-985, Asn-1002, and Asn-1068. The 67-residue stretch at 929–995 (PVCHGPLGEE…DTCCEIGHCE (67 aa)) folds into the VWFC domain. Intrachain disulfides connect Cys-1062/Cys-1109, Cys-1076/Cys-1123, Cys-1085/Cys-1139, and Cys-1089/Cys-1141. In terms of domain architecture, CTCK spans 1062-1146 (CKPSPVNVTV…TACSCLDPCQ (85 aa)).

In terms of assembly, intermolecular disulfide bonds could help maintain a multimeric mucin structure. Post-translationally, extensively O-glycosylated on most but not all Ser and Thr residues of the repeat units. Highest glycosylation appears to occur on Ser residues which have Gly at positions at +2 or -2 from the glycosylation site or, where Gly is the penultimate residue. The presence of proline (usually at position +3 or -3) appears to also enhance glycosylation. As to expression, submaxillary mucosae.

The protein resides in the secreted. Functionally, apomucin is part of mucin, the major glycoprotein synthesized and secreted by mucous cells of the submaxillary gland. Its highly viscous aqueous solutions serve to lubricate the oral cavity and to protect it from the external environment. This chain is Apomucin, found in Sus scrofa (Pig).